Reading from the N-terminus, the 678-residue chain is uncharacterized protein (678 aa).

Helical transmembrane passes span 14–34 (LMFA…WTGL) and 180–200 (GAVI…IGGF).

It belongs to the mycobacterial PPE family.

Its subcellular location is the cell membrane. This is an uncharacterized protein from Mycobacterium tuberculosis (strain ATCC 25618 / H37Rv).